Reading from the N-terminus, the 245-residue chain is 1-(5-phosphoribosyl)-5-[(5-phosphoribosylamino)methylideneamino] imidazole-4-carboxamide isomerase (245 aa).

Asp-8 acts as the Proton acceptor in catalysis. The active-site Proton donor is Asp-129.

The protein belongs to the HisA/HisF family.

The protein localises to the cytoplasm. It catalyses the reaction 1-(5-phospho-beta-D-ribosyl)-5-[(5-phospho-beta-D-ribosylamino)methylideneamino]imidazole-4-carboxamide = 5-[(5-phospho-1-deoxy-D-ribulos-1-ylimino)methylamino]-1-(5-phospho-beta-D-ribosyl)imidazole-4-carboxamide. The protein operates within amino-acid biosynthesis; L-histidine biosynthesis; L-histidine from 5-phospho-alpha-D-ribose 1-diphosphate: step 4/9. The polypeptide is 1-(5-phosphoribosyl)-5-[(5-phosphoribosylamino)methylideneamino] imidazole-4-carboxamide isomerase (Geotalea uraniireducens (strain Rf4) (Geobacter uraniireducens)).